A 426-amino-acid polypeptide reads, in one-letter code: Probable imidazolonepropionase (426 aa).

4-imidazolone-5-propanoate contacts are provided by tyrosine 158 and histidine 192. N-formimidoyl-L-glutamate is bound at residue tyrosine 158. Residue histidine 260 participates in Fe(3+) binding. Residue histidine 260 participates in Zn(2+) binding. A 4-imidazolone-5-propanoate-binding site is contributed by glutamate 263. A Fe(3+)-binding site is contributed by aspartate 334. Aspartate 334 provides a ligand contact to Zn(2+). Asparagine 336 is an N-formimidoyl-L-glutamate binding site.

The protein belongs to the metallo-dependent hydrolases superfamily. HutI family. It depends on Zn(2+) as a cofactor. Fe(3+) is required as a cofactor.

It carries out the reaction 4-imidazolone-5-propanoate + H2O = N-formimidoyl-L-glutamate. It functions in the pathway amino-acid degradation; L-histidine degradation into L-glutamate; N-formimidoyl-L-glutamate from L-histidine: step 3/3. The sequence is that of Probable imidazolonepropionase (amdhd1) from Dictyostelium discoideum (Social amoeba).